The chain runs to 277 residues: Energy-coupling factor transporter transmembrane protein EcfT (277 aa).

The next 6 helical transmembrane spans lie at 39–59, 61–81, 85–105, 121–141, 163–183, and 254–274; these read ITIL…YAII, FFCF…WNGV, IGLI…GHVF, AIYI…MTVT, VPVD…PTLF, and SKYD…LLIF.

Belongs to the energy-coupling factor EcfT family. In terms of assembly, forms a stable energy-coupling factor (ECF) transporter complex composed of 2 membrane-embedded substrate-binding proteins (S component), 2 ATP-binding proteins (A component) and 2 transmembrane proteins (T component). May be able to interact with more than 1 S component at a time.

The protein localises to the cell membrane. Transmembrane (T) component of an energy-coupling factor (ECF) ABC-transporter complex. Unlike classic ABC transporters this ECF transporter provides the energy necessary to transport a number of different substrates. This is Energy-coupling factor transporter transmembrane protein EcfT from Lactobacillus helveticus (strain DPC 4571).